The following is a 775-amino-acid chain: MVYAHNLGFPRIGIKREMKKTVEAYWRGEISQQQLQQQAIELQLTNWKIQAEAGVDLIPVGDFSWYDHVLDMAVRVGAIPSRFKALNSNITDTMFCMARGQAPNGIETSACEMTKWFDTNYHYIVPEFTTNQSFELHHDDLFKSTKLALENNYRAKPVILGPLSFLWLGKCKGESFNKLLLLEKLLPVYAEIFEQLSSLGVEWVQVDEPILVLDLPPEWQQAFLTTYQQLNFFNLKCLLATYFGSLDDNLSLTCQLPVDGLHIDYCRAPDQLDSVLSQLPAEKILSVGIIDGRNIWCNDLNRSLTLLENIQSSLGDRLWVAPSCSLLHVPIDLDQENKLDVELKSWFAFAKQKVAEAAFLTRGLREGRESIGAELKKNEEVIISRKTSKRIHNPNVEKKAASVTERLMRRQHEHSIRKNKQTAQLNLPLFPTTTIGSFPQTSQIRCLRRDYKQGKIDDALYEEKIRQEIAEVIGIQVKLGLDVLVHGEPERNDMVEYFGELLDGIAITSNGWVQSYGSRCVKPPIIFGDVSRERPMTLRWIEYAQSLTTKSVKGMLTGPVTILAWSFVRDDQPRSQTAKQIALALRDEVQDLERSGVRVIQIDEPAFRECLPLRKAAWQDYLEWAVKCFRLASCGVKDETQIHTHMCYSEFNDIIEAIAALDADVITIESSRSEMEILKSFEKFAYPNDIGPGIYDIHSPRIPRVAEIEELAVRALQYIPIERLWINPDCGLKTRNWEETKEALSRMVDAAKHLRKAFSSEKTPTIDLELQPAST.

Residues 16-19 (REMK) and lysine 115 each bind 5-methyltetrahydropteroyltri-L-glutamate. L-homocysteine contacts are provided by residues 435 to 437 (IGS) and glutamate 488. L-methionine contacts are provided by residues 435–437 (IGS) and glutamate 488. 5-methyltetrahydropteroyltri-L-glutamate-binding positions include 519 to 520 (RC) and tryptophan 565. Aspartate 603 serves as a coordination point for L-homocysteine. Residue aspartate 603 coordinates L-methionine. Residue glutamate 609 coordinates 5-methyltetrahydropteroyltri-L-glutamate. Histidine 645, cysteine 647, and glutamate 669 together coordinate Zn(2+). The active-site Proton donor is the histidine 698. Cysteine 730 is a binding site for Zn(2+).

This sequence belongs to the vitamin-B12 independent methionine synthase family. It depends on Zn(2+) as a cofactor.

It carries out the reaction 5-methyltetrahydropteroyltri-L-glutamate + L-homocysteine = tetrahydropteroyltri-L-glutamate + L-methionine. It participates in amino-acid biosynthesis; L-methionine biosynthesis via de novo pathway; L-methionine from L-homocysteine (MetE route): step 1/1. Its function is as follows. Catalyzes the transfer of a methyl group from 5-methyltetrahydrofolate to homocysteine resulting in methionine formation. The polypeptide is 5-methyltetrahydropteroyltriglutamate--homocysteine methyltransferase (Coxiella burnetii (strain Dugway 5J108-111)).